The chain runs to 239 residues: Ribonuclease P protein component 3 (239 aa).

The protein belongs to the eukaryotic/archaeal RNase P protein component 3 family. In terms of assembly, consists of a catalytic RNA component and at least 4-5 protein subunits.

The protein localises to the cytoplasm. It carries out the reaction Endonucleolytic cleavage of RNA, removing 5'-extranucleotides from tRNA precursor.. Functionally, part of ribonuclease P, a protein complex that generates mature tRNA molecules by cleaving their 5'-ends. In Methanosarcina barkeri (strain Fusaro / DSM 804), this protein is Ribonuclease P protein component 3.